Consider the following 165-residue polypeptide: Putative defense protein Hdd11 (165 aa).

The signal sequence occupies residues 1–17; that stretch reads MWATYVFIAVSLACANG. Positions 18 to 165 constitute a Reelin domain; it reads YSSGAPESVC…VESGPVKVIS (148 aa). C27 and C104 are disulfide-bonded.

This sequence belongs to the insect defense protein family.

It localises to the secreted. Its function is as follows. As this protein is expressed upon bacterial infection, it may have antimicrobial activity. This is Putative defense protein Hdd11 from Hyphantria cunea (Fall webworm moth).